The sequence spans 101 residues: MAKKALINRDLKRQALAKKYAAKRAAIKAVINDSNATEEERFEARLRFQSIPRNAAPVRQRRRCALTGRPRGTFRKFGLGRIKIREIAMRGEIPGVVKASW.

It belongs to the universal ribosomal protein uS14 family. As to quaternary structure, part of the 30S ribosomal subunit. Contacts proteins S3 and S10.

Its function is as follows. Binds 16S rRNA, required for the assembly of 30S particles and may also be responsible for determining the conformation of the 16S rRNA at the A site. This Neisseria gonorrhoeae (strain ATCC 700825 / FA 1090) protein is Small ribosomal subunit protein uS14.